A 944-amino-acid chain; its full sequence is Valine--tRNA ligase (944 aa).

The 'HIGH' region motif lies at 43–53; it reads PNVTGTLHMGH. Positions 550-554 match the 'KMSKS' region motif; the sequence is KMSKS. Residue Lys-553 participates in ATP binding. Positions 878-942 form a coiled coil; the sequence is LVDMDAERTR…QLTGLREQRA (65 aa).

The protein belongs to the class-I aminoacyl-tRNA synthetase family. ValS type 1 subfamily. Monomer.

Its subcellular location is the cytoplasm. It catalyses the reaction tRNA(Val) + L-valine + ATP = L-valyl-tRNA(Val) + AMP + diphosphate. In terms of biological role, catalyzes the attachment of valine to tRNA(Val). As ValRS can inadvertently accommodate and process structurally similar amino acids such as threonine, to avoid such errors, it has a 'posttransfer' editing activity that hydrolyzes mischarged Thr-tRNA(Val) in a tRNA-dependent manner. The chain is Valine--tRNA ligase from Xanthomonas axonopodis pv. citri (strain 306).